A 151-amino-acid chain; its full sequence is Group 10 secretory phospholipase A2 (151 aa).

The signal sequence occupies residues 1–17 (MLLLLLLLLLGPGSCLS). Positions 18–28 (EATRRSHVYKR) are excised as a propeptide. Intrachain disulfides connect Cys-39–Cys-97, Cys-53–Cys-143, Cys-55–Cys-71, Cys-70–Cys-125, Cys-76–Cys-150, Cys-77–Cys-118, Cys-86–Cys-111, and Cys-104–Cys-116. Residues Tyr-54, Gly-56, and Gly-58 each contribute to the Ca(2+) site. Residue His-74 is part of the active site. A Ca(2+)-binding site is contributed by Asp-75. The active site involves Asp-119.

Belongs to the phospholipase A2 family. In terms of assembly, interacts with PLA2R1; this interaction mediates PLA2G10 clearance and inactivation. Requires Ca(2+) as cofactor.

It localises to the secreted. The protein localises to the lysosome. It is found in the cytoplasmic vesicle. The protein resides in the secretory vesicle. Its subcellular location is the acrosome. The enzyme catalyses a 1,2-diacyl-sn-glycero-3-phosphocholine + H2O = a 1-acyl-sn-glycero-3-phosphocholine + a fatty acid + H(+). The catalysed reaction is 1-hexadecanoyl-2-(9Z-octadecenoyl)-sn-glycero-3-phosphocholine + H2O = 1-hexadecanoyl-sn-glycero-3-phosphocholine + (9Z)-octadecenoate + H(+). It carries out the reaction 1-octadecanoyl-2-(5Z,8Z,11Z,14Z-eicosatetraenoyl)-sn-glycero-3-phosphocholine + H2O = 1-octadecanoyl-sn-glycero-3-phosphocholine + (5Z,8Z,11Z,14Z)-eicosatetraenoate + H(+). It catalyses the reaction 1,2-dihexadecanoyl-sn-glycero-3-phosphocholine + H2O = 1-hexadecanoyl-sn-glycero-3-phosphocholine + hexadecanoate + H(+). The enzyme catalyses 1-hexadecanoyl-2-(9Z-octadecenoyl)-sn-glycero-3-phosphoglycerol + H2O = 1-hexadecanoyl-sn-glycero-3-phosphoglycerol + (9Z)-octadecenoate + H(+). The catalysed reaction is 1,2-dihexadecanoyl-sn-glycero-3-phospho-(1'-sn-glycerol) + H2O = 1-hexadecanoyl-sn-glycero-3-phospho-(1'-sn-glycerol) + hexadecanoate + H(+). It carries out the reaction 1-hexadecanoyl-2-(9Z-octadecenoyl)-sn-glycero-3-phospho-L-serine + H2O = 1-hexadecanoyl-sn-glycero-3-phospho-L-serine + (9Z)-octadecenoate + H(+). It catalyses the reaction 1-hexadecanoyl-2-(9Z,12Z-octadecadienoyl)-sn-glycero-3-phosphoethanolamine + H2O = 1-hexadecanoyl-sn-glycero-3-phosphoethanolamine + (9Z,12Z)-octadecadienoate + H(+). The enzyme catalyses 1-hexadecanoyl-2-(9Z-octadecenoyl)-sn-glycero-3-phosphate + H2O = 1-hexadecanoyl-sn-glycero-3-phosphate + (9Z)-octadecenoate + H(+). The catalysed reaction is 1-O-hexadecyl-2-acetyl-sn-glycero-3-phosphocholine + H2O = 1-O-hexadecyl-sn-glycero-3-phosphocholine + acetate + H(+). Functionally, secretory calcium-dependent phospholipase A2 that primarily targets extracellular phospholipids. Hydrolyzes the ester bond of the fatty acyl group attached at sn-2 position of phospholipids with preference for phosphatidylcholines and phosphatidylglycerols over phosphatidylethanolamines. Preferentially releases sn-2 omega-6 and omega-3 polyunsaturated fatty acyl (PUFA) chains over saturated fatty acyls. Contributes to phospholipid remodeling of very low-density lipoprotein (VLDL), low-density lipoprotein (LDL) and high-density lipoprotein (HDL) particles. Hydrolyzes LDL phospholipids releasing unsaturated fatty acids that regulate macrophage differentiation toward foam cells. Efficiently hydrolyzes and inactivates platelet activating factor (PAF), a potent lipid mediator present in oxidized LDL. May act in an autocrine and paracrine manner. Secreted by lung epithelium, targets membrane phospholipids of infiltrating eosinophils, releasing arachidonate and boosting eicosanoid and cysteinyl leukotriene synthesis involved in airway inflammatory response. Secreted by gut epithelium, hydrolyzes dietary and biliary phosphatidylcholines in the gastrointestinal lumen. Plays a stem cell regulator role in colon epithelium. Within intracellular compartment, mediates Paneth-like cell differentiation and its stem cell supporting functions by inhibiting the Wnt signaling pathway in intestinal stem cell (ISC). Secreted in the intestinal lumen upon inflammation, acts in an autocrine way and promotes prostaglandin E2 synthesis that stimulates Wnt signaling pathway in ISCs and tissue regeneration. May participate in hair follicle morphogenesis by regulating phosphatidylethanolamines metabolism at the outermost epithelial layer and facilitating melanin synthesis. By releasing lysophosphatidylcholines (LPCs) at sperm acrosome, controls sperm cell capacitation, acrosome reaction and overall fertility. May promote neurite outgrowth in neuron fibers involved in nociception. Contributes to lipid remodeling of cellular membranes and generation of lipid mediators involved in pathogen clearance. Cleaves sn-2 fatty acyl chains of phosphatidylglycerols and phosphatidylethanolamines, which are major components of membrane phospholipids in bacteria. Displays bactericidal activity against Gram-positive bacteria by directly hydrolyzing phospholipids of the bacterial membrane. In pulmonary epithelium, may contribute to host defense response against adenoviral infection. Prevents adenovirus entry into host cells by hydrolyzing host cell plasma membrane, releasing C16:0 LPCs that inhibit virus-mediated membrane fusion and viral infection. Likely prevents adenoviral entry into the endosomes of host cells. May play a role in maturation and activation of innate immune cells including macrophages, group 2 innate lymphoid cells and mast cells. In Rattus norvegicus (Rat), this protein is Group 10 secretory phospholipase A2 (Pla2g10).